Here is a 645-residue protein sequence, read N- to C-terminus: UvrABC system protein B (645 aa).

One can recognise a Helicase ATP-binding domain in the interval 24-414 (AGLNDNKRDQ…LFVEQVIRPT (391 aa)). 37–44 (GVTGSGKT) is an ATP binding site. Residues 90-113 (YYDYYQPEAYLPQTDTYIEKDSVI) carry the Beta-hairpin motif. Positions 426–591 (AEAQVYDVVH…VLPKTIIKPI (166 aa)) constitute a Helicase C-terminal domain. Residues 610 to 645 (KDTVSSLRKQMLAHAKNLEFEEAAKIKNIIGRINNL) form the UVR domain.

Belongs to the UvrB family. Forms a heterotetramer with UvrA during the search for lesions. Interacts with UvrC in an incision complex.

The protein localises to the cytoplasm. Functionally, the UvrABC repair system catalyzes the recognition and processing of DNA lesions. A damage recognition complex composed of 2 UvrA and 2 UvrB subunits scans DNA for abnormalities. Upon binding of the UvrA(2)B(2) complex to a putative damaged site, the DNA wraps around one UvrB monomer. DNA wrap is dependent on ATP binding by UvrB and probably causes local melting of the DNA helix, facilitating insertion of UvrB beta-hairpin between the DNA strands. Then UvrB probes one DNA strand for the presence of a lesion. If a lesion is found the UvrA subunits dissociate and the UvrB-DNA preincision complex is formed. This complex is subsequently bound by UvrC and the second UvrB is released. If no lesion is found, the DNA wraps around the other UvrB subunit that will check the other stand for damage. In Wolbachia sp. subsp. Brugia malayi (strain TRS), this protein is UvrABC system protein B.